A 324-amino-acid chain; its full sequence is Porphobilinogen deaminase 1 (324 aa).

S-(dipyrrolylmethanemethyl)cysteine is present on cysteine 249.

The protein belongs to the HMBS family. Monomer. The cofactor is dipyrromethane.

The enzyme catalyses 4 porphobilinogen + H2O = hydroxymethylbilane + 4 NH4(+). It participates in porphyrin-containing compound metabolism; protoporphyrin-IX biosynthesis; coproporphyrinogen-III from 5-aminolevulinate: step 2/4. In terms of biological role, tetrapolymerization of the monopyrrole PBG into the hydroxymethylbilane pre-uroporphyrinogen in several discrete steps. The chain is Porphobilinogen deaminase 1 (hemC1) from Streptomyces avermitilis (strain ATCC 31267 / DSM 46492 / JCM 5070 / NBRC 14893 / NCIMB 12804 / NRRL 8165 / MA-4680).